We begin with the raw amino-acid sequence, 362 residues long: 3-dehydroquinate synthase (362 aa).

NAD(+) is bound by residues 72-77 (DGEAHK), 106-110 (GVIGD), 130-131 (TT), lysine 143, and lysine 152. Residues glutamate 185, histidine 248, and histidine 265 each coordinate Zn(2+).

It belongs to the sugar phosphate cyclases superfamily. Dehydroquinate synthase family. Co(2+) serves as cofactor. Requires Zn(2+) as cofactor. The cofactor is NAD(+).

It is found in the cytoplasm. It carries out the reaction 7-phospho-2-dehydro-3-deoxy-D-arabino-heptonate = 3-dehydroquinate + phosphate. The protein operates within metabolic intermediate biosynthesis; chorismate biosynthesis; chorismate from D-erythrose 4-phosphate and phosphoenolpyruvate: step 2/7. Functionally, catalyzes the conversion of 3-deoxy-D-arabino-heptulosonate 7-phosphate (DAHP) to dehydroquinate (DHQ). The polypeptide is 3-dehydroquinate synthase (Laribacter hongkongensis (strain HLHK9)).